The sequence spans 118 residues: Small ribosomal subunit protein uS13 (118 aa).

The tract at residues 94 to 118 is disordered; it reads GLPVRGQRTKTNARTRKGPRKPIKK.

It belongs to the universal ribosomal protein uS13 family. In terms of assembly, part of the 30S ribosomal subunit. Forms a loose heterodimer with protein S19. Forms two bridges to the 50S subunit in the 70S ribosome.

In terms of biological role, located at the top of the head of the 30S subunit, it contacts several helices of the 16S rRNA. In the 70S ribosome it contacts the 23S rRNA (bridge B1a) and protein L5 of the 50S subunit (bridge B1b), connecting the 2 subunits; these bridges are implicated in subunit movement. Contacts the tRNAs in the A and P-sites. This is Small ribosomal subunit protein uS13 from Mannheimia succiniciproducens (strain KCTC 0769BP / MBEL55E).